A 122-amino-acid chain; its full sequence is Small ribosomal subunit protein uS12 (122 aa).

Asp89 is modified (3-methylthioaspartic acid).

Belongs to the universal ribosomal protein uS12 family. In terms of assembly, part of the 30S ribosomal subunit. Contacts proteins S8 and S17. May interact with IF1 in the 30S initiation complex.

In terms of biological role, with S4 and S5 plays an important role in translational accuracy. Functionally, interacts with and stabilizes bases of the 16S rRNA that are involved in tRNA selection in the A site and with the mRNA backbone. Located at the interface of the 30S and 50S subunits, it traverses the body of the 30S subunit contacting proteins on the other side and probably holding the rRNA structure together. The combined cluster of proteins S8, S12 and S17 appears to hold together the shoulder and platform of the 30S subunit. The protein is Small ribosomal subunit protein uS12 of Corynebacterium glutamicum (strain R).